Here is a 57-residue protein sequence, read N- to C-terminus: Small ribosomal subunit protein bS21 (57 aa).

Belongs to the bacterial ribosomal protein bS21 family.

The protein is Small ribosomal subunit protein bS21 of Phytoplasma australiense.